We begin with the raw amino-acid sequence, 371 residues long: Prephenate dehydrogenase (371 aa).

The Prephenate/arogenate dehydrogenase domain maps to 6 to 295 (DTILLAGLGL…GLPLRQKGAI (290 aa)). 7–37 (TILLAGLGLIGGSIALAIKKNHPGKRIIGID) is a binding site for NAD(+). An ACT domain is found at 300-371 (DLYVDVPDHP…RAEYETFYAD (72 aa)).

The protein belongs to the prephenate/arogenate dehydrogenase family.

It catalyses the reaction prephenate + NAD(+) = 3-(4-hydroxyphenyl)pyruvate + CO2 + NADH. Its pathway is amino-acid biosynthesis; L-tyrosine biosynthesis; (4-hydroxyphenyl)pyruvate from prephenate (NAD(+) route): step 1/1. The protein is Prephenate dehydrogenase (tyrA) of Bacillus subtilis (strain 168).